Here is a 454-residue protein sequence, read N- to C-terminus: MSRLFGTDGVRGLANGLLTAELAMQLAQAAAVVLGHDRTTDGKRPRAVVARDPRASGEFLAAAVEAGLSSSGIDVYDAGVLPTPAAAYLVADLDADFGVMLSASHNPAPDNGIKFFARGGQKLPDDVEDAIEAQLGKEPQRPVGADVGRIQRFSDAEDRYIVHLLGTLPKRLEGLKVVLDCAHGAASGCSPQVFKDAGAEVVVIGAEPDGLNINDGVGSTHLGPLKEAVVKHGADLGVAHDGDADRCLAVDHEGNEVDGDQIMAILALALKEAGKLKDNILVATVMSNLGLKIALRDAGITIRETGVGDRYVLEEMRDGGYNLGGEQSGHVIFSDFATTGDGVLTGLQLAAQVALTGRSLKDLSSAMTKLPQLMINVKDVDKARAATDEGVAEAVAAAELELGETGRVLLRPSGTEALVRVMVEAADMETAERICKGLAAVVKERLGAPSELAV.

S104 (phosphoserine intermediate) is an active-site residue. Residues S104, D241, D243, and D245 each coordinate Mg(2+). The residue at position 104 (S104) is a Phosphoserine.

The protein belongs to the phosphohexose mutase family. Mg(2+) serves as cofactor. Activated by phosphorylation.

It catalyses the reaction alpha-D-glucosamine 1-phosphate = D-glucosamine 6-phosphate. Functionally, catalyzes the conversion of glucosamine-6-phosphate to glucosamine-1-phosphate. This chain is Phosphoglucosamine mutase, found in Paenarthrobacter aurescens (strain TC1).